The primary structure comprises 1680 residues: SWI/SNF chromatin-remodeling complex subunit snf22 (1680 aa).

Disordered regions lie at residues 61-135 (QQMR…SQAS), 203-258 (NNSF…HSFS), 274-300 (RRGS…ASPY), and 367-427 (YVYR…VPPT). A compositionally biased stretch (polar residues) spans 62–91 (QMRNQSSEFPDAENTNLRKQQDTLPTTGFN). Low complexity-rich tracts occupy residues 118–127 (GNGNVGLNNP) and 222–233 (SSLPHSFASPSS). Residues 234–245 (TFEQPHTVQSRA) show a composition bias toward polar residues. Low complexity-rich tracts occupy residues 247–258 (SVDTTSSSHSFS), 282–299 (PSTF…LASP), and 374–392 (PPSA…SVDP). Residues 406 to 419 (PSPSASALKTQSHV) show a composition bias toward polar residues. Residues 429 to 465 (KLNHAQLAMLKSQIVAYNCLNSPNGQVPPAVQQAIFG) form the QLQ domain. Polar residues predominate over residues 477–489 (SMPFQQNVPQMSS). The interval 477–499 (SMPFQQNVPQMSSVKKDTPTRDA) is disordered. The segment covering 490 to 499 (VKKDTPTRDA) has biased composition (basic and acidic residues). Positions 704–776 (QKTEHAMRQK…ARQRLQALRA (73 aa)) constitute an HSA domain. Residues 817-832 (SNIHSGNTSGKGSNSA) are compositionally biased toward polar residues. Residues 817–836 (SNIHSGNTSGKGSNSAELEA) form a disordered region. A Helicase ATP-binding domain is found at 881–1046 (LSLYNNNLNG…WALLNFVLPK (166 aa)). 894 to 901 (DEMGLGKT) serves as a coordination point for ATP. The DEGH box signature appears at 996–999 (DEGH). Residues 1191-1354 (LLDRILPKLF…STPEEREAFL (164 aa)) form the Helicase C-terminal domain. Positions 1466-1511 (TVDDPSSTLMPRKRGRPRKKTNSGSSLSTPLSQESSLARSGRKNTP) are disordered. The span at 1476-1486 (PRKRGRPRKKT) shows a compositional bias: basic residues. Over residues 1488-1502 (SGSSLSTPLSQESSL) the composition is skewed to low complexity. The Bromo domain maps to 1513–1623 (YKQKALRRYC…KTLKEVIEDL (111 aa)).

The protein belongs to the SNF2/RAD54 helicase family. As to quaternary structure, component of the SWI/SNF global transcription activator complex composed of at least arp9, arp42, snf5, snf22, snf30, sbf59, sol1, ssr1, ssr2, ssr3, ssr4 and tfg3.

The protein resides in the nucleus. Functionally, helicase. Component of the SWI/SNF complex, an ATP-dependent chromatin remodeling complex, required for the positive and negative regulation of gene expression of a large number of genes. It changes chromatin structure by altering DNA-histone contacts within a nucleosome, leading eventually to a change in nucleosome position, thus facilitating or repressing binding of gene-specific transcription factors. The polypeptide is SWI/SNF chromatin-remodeling complex subunit snf22 (snf22) (Schizosaccharomyces pombe (strain 972 / ATCC 24843) (Fission yeast)).